Consider the following 320-residue polypeptide: uncharacterized protein (320 aa).

46–53 is an ATP binding site; the sequence is DVPGVGKT.

This sequence belongs to the MoxR family.

This is an uncharacterized protein from Bacillus subtilis (strain 168).